Reading from the N-terminus, the 184-residue chain is NADH-quinone oxidoreductase subunit B (184 aa).

4 residues coordinate [4Fe-4S] cluster: cysteine 37, cysteine 38, cysteine 103, and cysteine 132.

The protein belongs to the complex I 20 kDa subunit family. In terms of assembly, NDH-1 is composed of 14 different subunits. Subunits NuoB, C, D, E, F, and G constitute the peripheral sector of the complex. Requires [4Fe-4S] cluster as cofactor.

Its subcellular location is the cell membrane. It catalyses the reaction a quinone + NADH + 5 H(+)(in) = a quinol + NAD(+) + 4 H(+)(out). In terms of biological role, NDH-1 shuttles electrons from NADH, via FMN and iron-sulfur (Fe-S) centers, to quinones in the respiratory chain. The immediate electron acceptor for the enzyme in this species is believed to be a menaquinone. Couples the redox reaction to proton translocation (for every two electrons transferred, four hydrogen ions are translocated across the cytoplasmic membrane), and thus conserves the redox energy in a proton gradient. This is NADH-quinone oxidoreductase subunit B from Rhodococcus opacus (strain B4).